The sequence spans 535 residues: uncharacterized protein (535 aa).

Residues 1-34 (MKAIDNQIRNISSSHQDKHSDKVNSHQHHGKVDK) are disordered. A compositionally biased stretch (basic and acidic residues) spans 15-34 (HQDKHSDKVNSHQHHGKVDK).

This is an uncharacterized protein from Escherichia coli (strain K12).